Here is a 311-residue protein sequence, read N- to C-terminus: Ribosomal RNA small subunit methyltransferase H (311 aa).

S-adenosyl-L-methionine is bound by residues 32–34, aspartate 52, phenylalanine 79, aspartate 100, and glutamine 107; that span reads AGH.

The protein belongs to the methyltransferase superfamily. RsmH family.

Its subcellular location is the cytoplasm. It carries out the reaction cytidine(1402) in 16S rRNA + S-adenosyl-L-methionine = N(4)-methylcytidine(1402) in 16S rRNA + S-adenosyl-L-homocysteine + H(+). In terms of biological role, specifically methylates the N4 position of cytidine in position 1402 (C1402) of 16S rRNA. In Staphylococcus aureus (strain COL), this protein is Ribosomal RNA small subunit methyltransferase H.